The following is a 338-amino-acid chain: Tetraacyldisaccharide 4'-kinase (338 aa).

ATP is bound at residue 49 to 56; it reads TVGGTGKT.

It belongs to the LpxK family.

It carries out the reaction a lipid A disaccharide + ATP = a lipid IVA + ADP + H(+). Its pathway is glycolipid biosynthesis; lipid IV(A) biosynthesis; lipid IV(A) from (3R)-3-hydroxytetradecanoyl-[acyl-carrier-protein] and UDP-N-acetyl-alpha-D-glucosamine: step 6/6. Its function is as follows. Transfers the gamma-phosphate of ATP to the 4'-position of a tetraacyldisaccharide 1-phosphate intermediate (termed DS-1-P) to form tetraacyldisaccharide 1,4'-bis-phosphate (lipid IVA). The protein is Tetraacyldisaccharide 4'-kinase of Geobacter metallireducens (strain ATCC 53774 / DSM 7210 / GS-15).